A 459-amino-acid chain; its full sequence is Xylose/arabinose-binding protein XacG (459 aa).

A helical membrane pass occupies residues 19–36; that stretch reads ALTVGAAAGIAGCTGGGG. Residues 27–68 are disordered; the sequence is GIAGCTGGGGTETESTESGNGNGSGGSTDDTETSGSSSGESW.

This sequence belongs to the bacterial solute-binding protein 1 family. The complex is composed of two ATP-binding proteins (XacJ and XacK), two transmembrane proteins (XacH and XacI) and a solute-binding protein (XacG).

It is found in the cell membrane. Functionally, part of the ABC transporter complex XacGHIJK involved in the uptake of xylose and arabinose. This Haloferax volcanii (strain ATCC 29605 / DSM 3757 / JCM 8879 / NBRC 14742 / NCIMB 2012 / VKM B-1768 / DS2) (Halobacterium volcanii) protein is Xylose/arabinose-binding protein XacG.